Consider the following 113-residue polypeptide: U11-theraphotoxin-Hhn1a (113 aa).

The first 21 residues, 1–21 (MNTVRVTFLLVFVLAVSLGQA), serve as a signal peptide directing secretion. The propeptide occupies 22–74 (DKDENRMVMQEKTEQGKSYLDFAENLLLQKLEELEAKLLEEDSEESRNSRQKR). 3 disulfides stabilise this stretch: Cys75–Cys90, Cys82–Cys95, and Cys89–Cys110.

It belongs to the neurotoxin 14 (magi-1) family. 01 (HNTX-16) subfamily. Expressed by the venom gland.

The protein resides in the secreted. Its function is as follows. Probable ion channel inhibitor. The polypeptide is U11-theraphotoxin-Hhn1a (Cyriopagopus hainanus (Chinese bird spider)).